A 67-amino-acid polypeptide reads, in one-letter code: Beta-defensin 14 (67 aa).

The N-terminal stretch at 1–22 is a signal peptide; it reads MRLHYLLFVFLILFLVPAPGDA. 3 disulfide bridges follow: Cys33–Cys62, Cys40–Cys55, and Cys45–Cys63.

This sequence belongs to the beta-defensin family.

The protein localises to the secreted. In terms of biological role, has antibacterial activity. The sequence is that of Beta-defensin 14 (Defb14) from Mus musculus (Mouse).